The chain runs to 261 residues: Putative glyoxylase CFP32 (261 aa).

2 VOC domains span residues 11 to 129 (TPNW…LWQA) and 143 to 257 (TLIW…VLKP). Glyoxalase stretches follow at residues 13–123 (NWVD…TGAA) and 149–252 (LLTD…GAIF).

This Mycobacterium bovis (strain ATCC BAA-935 / AF2122/97) protein is Putative glyoxylase CFP32.